The primary structure comprises 227 residues: Flagellar transcriptional regulator FtcR (227 aa).

Residues Met-1–Arg-116 form the Response regulatory domain. The ompR/PhoB-type DNA-binding region spans Ala-127–Ile-226.

Its function is as follows. Required for transcription of flagellar genes. The chain is Flagellar transcriptional regulator FtcR (ftcR) from Brucella abortus (strain 2308).